The sequence spans 790 residues: Sorting nexin mvp1 (790 aa).

2 stretches are compositionally biased toward polar residues: residues 1-10 (MSLFGSSPPN) and 20-40 (KTANSSRSTLFDNEAPTTRSG). Disordered stretches follow at residues 1-62 (MSLF…RKQR), 215-342 (PNLS…SIHN), and 373-406 (AITGPFGDSGGPGQSVSGSVGGSNPNRSIGHVRS). Over residues 225-240 (PQRPVTPPKAPTPSPP) the composition is skewed to pro residues. A compositionally biased stretch (low complexity) spans 241 to 252 (KQQQQQQHQPPT). A compositionally biased stretch (basic and acidic residues) spans 269 to 283 (DLHKGHNHGPLEHST). The segment covering 297 to 319 (NDLNGNDAVSYSTSPEVTTTSSA) has biased composition (polar residues). Low complexity-rich tracts occupy residues 324-339 (TTSTFTTSQPPSGPSS) and 386-400 (QSVSGSVGGSNPNRS). The 115-residue stretch at 411–525 (EENILVTLMP…IMFLTVPTEL (115 aa)) folds into the PX domain. A 1,2-diacyl-sn-glycero-3-phospho-(1D-myo-inositol-3-phosphate) is bound by residues Arg447, Ser449, Lys473, and Arg492.

The protein belongs to the sorting nexin family.

It localises to the cytoplasm. Its subcellular location is the membrane. Required for vacuolar protein sorting. This Neurospora crassa (strain ATCC 24698 / 74-OR23-1A / CBS 708.71 / DSM 1257 / FGSC 987) protein is Sorting nexin mvp1 (vsp-1).